A 156-amino-acid polypeptide reads, in one-letter code: dCTP deaminase (156 aa).

Residues 79-84 (RSSLAR), D95, Q124, and Y138 each bind dCTP.

This sequence belongs to the dCTP deaminase family. As to quaternary structure, homotrimer.

The enzyme catalyses dCTP + H2O + H(+) = dUTP + NH4(+). It participates in pyrimidine metabolism; dUMP biosynthesis; dUMP from dCTP (dUTP route): step 1/2. Functionally, catalyzes the deamination of dCTP to dUTP. This chain is dCTP deaminase, found in Pyrococcus horikoshii (strain ATCC 700860 / DSM 12428 / JCM 9974 / NBRC 100139 / OT-3).